We begin with the raw amino-acid sequence, 200 residues long: MLKYPDYLSKLISLLRKLPGIGFKTAEKLAFELLDWDQDQLEAMGQAFSEVSAARSHCSTCFCLKNLPESNCEFCQNNRDTSTLCIVATPKDIFSLERSQIFKGHYYVLGTLLSPITGKHIDVERIGLLKQRIEFLKPQEIILALDATLEGDATALFLKQELAFSSASISRLALGLPIGLSFDYVDSGTLARAFSGRNPY.

Residues 58–75 form a C4-type zinc finger; it reads CSTCFCLKNLPESNCEFC. Residues 82–177 enclose the Toprim domain; it reads STLCIVATPK…SISRLALGLP (96 aa).

This sequence belongs to the RecR family.

Its function is as follows. May play a role in DNA repair. It seems to be involved in an RecBC-independent recombinational process of DNA repair. It may act with RecF and RecO. This is Recombination protein RecR from Chlamydia caviae (strain ATCC VR-813 / DSM 19441 / 03DC25 / GPIC) (Chlamydophila caviae).